The following is a 463-amino-acid chain: ATP synthase subunit beta (463 aa).

151–158 provides a ligand contact to ATP; it reads GGAGVGKT.

It belongs to the ATPase alpha/beta chains family. F-type ATPases have 2 components, CF(1) - the catalytic core - and CF(0) - the membrane proton channel. CF(1) has five subunits: alpha(3), beta(3), gamma(1), delta(1), epsilon(1). CF(0) has three main subunits: a(1), b(2) and c(9-12). The alpha and beta chains form an alternating ring which encloses part of the gamma chain. CF(1) is attached to CF(0) by a central stalk formed by the gamma and epsilon chains, while a peripheral stalk is formed by the delta and b chains.

It localises to the cell membrane. The enzyme catalyses ATP + H2O + 4 H(+)(in) = ADP + phosphate + 5 H(+)(out). Its function is as follows. Produces ATP from ADP in the presence of a proton gradient across the membrane. The catalytic sites are hosted primarily by the beta subunits. The sequence is that of ATP synthase subunit beta from Clostridium botulinum (strain Okra / Type B1).